A 553-amino-acid chain; its full sequence is Cytokine-like nuclear factor N-PAC (553 aa).

The region spanning 8–66 is the PWWP domain; the sequence is LGDLVWGKLGRYPPWPGKIVNPPKDLKKPRGKKCFFVKFFGTEDHAWIKVEQLKPYHAH. Composition is skewed to basic and acidic residues over residues 92-145 and 162-182; these read RAKG…EGKK and RAQE…KDLT. Residues 92–188 form a disordered region; the sequence is RAKGKDQTSS…KDLTIPESST (97 aa). Ser130 is modified (phosphoserine). Residue Lys135 forms a Glycyl lysine isopeptide (Lys-Gly) (interchain with G-Cter in SUMO2) linkage. Ser167 is modified (phosphoserine). Positions 168–180 form a DNA-binding region, a.T hook; it reads PRKRGRPPKDEKD. Residues Lys176, Lys179, Lys201, and Lys211 each participate in a glycyl lysine isopeptide (Lys-Gly) (interchain with G-Cter in SUMO2) cross-link. The interaction with histone H3 stretch occupies residues 214–217; the sequence is DPHF. An interaction with KDM1B region spans residues 216–225; the sequence is HFHHFLLSQT. Residues Lys227, Lys237, Lys240, and Lys269 each participate in a glycyl lysine isopeptide (Lys-Gly) (interchain with G-Cter in SUMO2) cross-link. Residues 261–553 form a dehydrogenase domain region; it reads GSITPTDKKI…MSAVYRAYIH (293 aa). An NAD(+)-binding site is contributed by 271-285; sequence GFLGLGLMGSGIVSN. A Glycyl lysine isopeptide (Lys-Gly) (interchain with G-Cter in SUMO2) cross-link involves residue Lys302. Residues Thr362 and Lys505 each contribute to the NAD(+) site. Ser540 bears the Phosphoserine mark.

This sequence belongs to the HIBADH-related family. NP60 subfamily. As to quaternary structure, homotetramere. Interacts with MAPK14. Interacts with KDM1B at nucleosomes; this interaction stimulates H3K4me1 and H3K4me2 demethylation. Binds to mononucleosomes. Interacts with GATA4; the interaction is required for a synergistic activation of GATA4 target genes transcription.

Its subcellular location is the nucleus. The protein resides in the chromosome. Functionally, cytokine-like nuclear factor with chromatin gene reader activity involved in chromatin modification and regulation of gene expression. Acts as a nucleosome-destabilizing factor that is recruited to genes during transcriptional activation. Recognizes and binds histone H3 without a preference for specific epigenetic markers and also binds DNA. Interacts with KDM1B and promotes its histone demethylase activity by facilitating the capture of H3 tails, they form a multifunctional enzyme complex that modifies transcribed chromatin and facilitates Pol II transcription through nucleosomes. Stimulates the acetylation of 'Lys-56' of nucleosomal histone H3 (H3K56ac) by EP300. With GATA4, co-binds a defined set of heart development genes and coregulates their expression during cardiomyocyte differentiation. Regulates p38 MAP kinase activity by mediating stress activation of MAPK14/p38alpha and specifically regulating MAPK14 signaling. Indirectly promotes phosphorylation of MAPK14 and activation of ATF2. The phosphorylation of MAPK14 requires upstream activity of MAP2K4 and MAP2K6. This is Cytokine-like nuclear factor N-PAC (GLYR1) from Pongo abelii (Sumatran orangutan).